The chain runs to 953 residues: Dual serine/threonine and tyrosine protein kinase (953 aa).

Positions 665–926 (PKLEREIGRG…VQSKLQDIYT (262 aa)) constitute a Protein kinase domain. ATP-binding positions include 671–679 (IGRGQYGVV) and Lys-694. Asp-791 (proton acceptor) is an active-site residue. The disordered stretch occupies residues 932-953 (REAEGGGGGGAKEQQNLKSDTL).

This sequence belongs to the protein kinase superfamily. Ser/Thr protein kinase family.

Its subcellular location is the cytoplasm. The protein localises to the cell membrane. It localises to the apical cell membrane. It is found in the basolateral cell membrane. The protein resides in the cell junction. It carries out the reaction L-seryl-[protein] + ATP = O-phospho-L-seryl-[protein] + ADP + H(+). The catalysed reaction is L-threonyl-[protein] + ATP = O-phospho-L-threonyl-[protein] + ADP + H(+). It catalyses the reaction L-tyrosyl-[protein] + ATP = O-phospho-L-tyrosyl-[protein] + ADP + H(+). Its function is as follows. May act as a positive regulator of ERK phosphorylation downstream of fibroblast growth factor-receptor activation. May induce both caspase-dependent apoptosis and caspase-independent cell death. May play a role in the embryonic development. The protein is Dual serine/threonine and tyrosine protein kinase of Strongylocentrotus purpuratus (Purple sea urchin).